The primary structure comprises 33 residues: Potassium channel toxin alpha-KTx 10.5 (33 aa).

Intrachain disulfides connect C4–C23, C9–C28, and C13–C30.

Expressed by the venom gland.

It localises to the secreted. Functionally, inhibits less than 5% of human voltage-gated potassium (Kv) channel Kv1.3/KCNA3 currents at 100nM concentration and does not block human Kv1.1/KCNA1 and Kv1.2/KCNA2 currents. The protein is Potassium channel toxin alpha-KTx 10.5 of Centruroides bonito (Scorpion).